We begin with the raw amino-acid sequence, 346 residues long: Anthranilate phosphoribosyltransferase (346 aa).

Residues Gly-81, 84-85 (GD), 91-94 (NVST), 109-117 (KHGNRSVSS), and Ser-121 each bind 5-phospho-alpha-D-ribose 1-diphosphate. Gly-81 lines the anthranilate pocket. Ser-93 is a binding site for Mg(2+). Anthranilate is bound at residue Asn-112. Anthranilate is bound at residue Arg-167. Mg(2+) is bound by residues Asp-226 and Glu-227.

The protein belongs to the anthranilate phosphoribosyltransferase family. Homodimer. The cofactor is Mg(2+).

It catalyses the reaction N-(5-phospho-beta-D-ribosyl)anthranilate + diphosphate = 5-phospho-alpha-D-ribose 1-diphosphate + anthranilate. Its pathway is amino-acid biosynthesis; L-tryptophan biosynthesis; L-tryptophan from chorismate: step 2/5. Its function is as follows. Catalyzes the transfer of the phosphoribosyl group of 5-phosphorylribose-1-pyrophosphate (PRPP) to anthranilate to yield N-(5'-phosphoribosyl)-anthranilate (PRA). In Hahella chejuensis (strain KCTC 2396), this protein is Anthranilate phosphoribosyltransferase.